An 802-amino-acid polypeptide reads, in one-letter code: MAAKLTRLHSLRERLGATFSSHPNELIALFSRYVHQGKGMLQRHQLLAEFDALFDSDKEKYAPFEDILRAAQEAIVLPPWVALAIRPRPGVWDYIRVNVSELAVEELSVSEYLAFKEQLVDGQSNSNFVLELDFEPFNASFPRPSMSKSIGNGVQFLNRHLSSKLFQDKESLYPLLNFLKAHNYKGTTMMLNDRIQSLRGLQSSLRKAEEYLLSVPQDTPYSEFNHRFQELGLEKGWGDTAKRVLDTLHLLLDLLEAPDPANLEKFLGTIPMMFNVVILSPHGYFAQSNVLGYPDTGGQVVYILDQVRALENEMLLRIKQQGLDITPKILIVTRLLPDAAGTTCGQRLEKVIGTEHTDIIRVPFRNENGILRKWISRFDVWPYLETYTEDVSSEIMKEMQAKPDLIIGNYSDGNLVATLLAHKLGVTQCTIAHALEKTKYPNSDIYLDKFDSQYHFSCQFTADLIAMNHTDFIITSTFQEIAGSKDTVGQYESHIAFTLPGLYRVVHGIDVFDPKFNIVSPGADMSVYYPYTETDKRLTAFHPEIEELIYSDVENSEHKFVLKDKKKPIIFSMARLDRVKNMTGLVEMYGKNARLRELANLVIVAGDHGKESKDREEQAEFKKMYSLIDEYKLKGHIRWISAQMNRVRNGELYRYICDTKGAFVQPAFYEAFGLTVIESMTCGLPTIATCHGGPAEIIVDGVSGLHIDPYHSDKAADILVNFFDKCKADPSYWDEISQGGLQRIYEKYTWKLYSERLMTLTGVYGFWKYVSNLERRETRRYIEMFYALKYRSLASQVPLSFD.

The GT-B glycosyltransferase stretch occupies residues 272–749; it reads MMFNVVILSP…GLQRIYEKYT (478 aa).

It belongs to the glycosyltransferase 1 family. Plant sucrose synthase subfamily.

It carries out the reaction an NDP-alpha-D-glucose + D-fructose = a ribonucleoside 5'-diphosphate + sucrose + H(+). In terms of biological role, sucrose-cleaving enzyme that provides UDP-glucose and fructose for various metabolic pathways. Most active in the sink tissues where it is responsible for the breakdown of the arriving sucrose. This chain is Sucrose synthase 1 (SH-1), found in Zea mays (Maize).